The primary structure comprises 171 residues: Crossover junction endodeoxyribonuclease RuvC (171 aa).

Active-site residues include D11, E71, and D143. Positions 11, 71, and 143 each coordinate Mg(2+).

The protein belongs to the RuvC family. As to quaternary structure, homodimer which binds Holliday junction (HJ) DNA. The HJ becomes 2-fold symmetrical on binding to RuvC with unstacked arms; it has a different conformation from HJ DNA in complex with RuvA. In the full resolvosome a probable DNA-RuvA(4)-RuvB(12)-RuvC(2) complex forms which resolves the HJ. Requires Mg(2+) as cofactor.

It localises to the cytoplasm. The enzyme catalyses Endonucleolytic cleavage at a junction such as a reciprocal single-stranded crossover between two homologous DNA duplexes (Holliday junction).. The RuvA-RuvB-RuvC complex processes Holliday junction (HJ) DNA during genetic recombination and DNA repair. Endonuclease that resolves HJ intermediates. Cleaves cruciform DNA by making single-stranded nicks across the HJ at symmetrical positions within the homologous arms, yielding a 5'-phosphate and a 3'-hydroxyl group; requires a central core of homology in the junction. The consensus cleavage sequence is 5'-(A/T)TT(C/G)-3'. Cleavage occurs on the 3'-side of the TT dinucleotide at the point of strand exchange. HJ branch migration catalyzed by RuvA-RuvB allows RuvC to scan DNA until it finds its consensus sequence, where it cleaves and resolves the cruciform DNA. This chain is Crossover junction endodeoxyribonuclease RuvC, found in Chelativorans sp. (strain BNC1).